The sequence spans 275 residues: Energy-coupling factor transporter ATP-binding protein EcfA1 (275 aa).

Residues 5 to 240 (IDVKNLSFRY…NDLDQIGLDD (236 aa)) form the ABC transporter domain. An ATP-binding site is contributed by 40-47 (GHNGSGKS).

This sequence belongs to the ABC transporter superfamily. Energy-coupling factor EcfA family. In terms of assembly, forms a stable energy-coupling factor (ECF) transporter complex composed of 2 membrane-embedded substrate-binding proteins (S component), 2 ATP-binding proteins (A component) and 2 transmembrane proteins (T component).

The protein resides in the cell membrane. ATP-binding (A) component of a common energy-coupling factor (ECF) ABC-transporter complex. Unlike classic ABC transporters this ECF transporter provides the energy necessary to transport a number of different substrates. In Streptococcus pneumoniae serotype 4 (strain ATCC BAA-334 / TIGR4), this protein is Energy-coupling factor transporter ATP-binding protein EcfA1.